We begin with the raw amino-acid sequence, 243 residues long: Pyridoxine 5'-phosphate synthase (243 aa).

Asn-7 lines the 3-amino-2-oxopropyl phosphate pocket. 9–10 (DH) provides a ligand contact to 1-deoxy-D-xylulose 5-phosphate. Arg-18 is a 3-amino-2-oxopropyl phosphate binding site. Catalysis depends on His-43, which acts as the Proton acceptor. Residues Arg-45 and His-50 each contribute to the 1-deoxy-D-xylulose 5-phosphate site. Glu-70 functions as the Proton acceptor in the catalytic mechanism. Residue Thr-100 coordinates 1-deoxy-D-xylulose 5-phosphate. Residue His-190 is the Proton donor of the active site. 3-amino-2-oxopropyl phosphate is bound by residues Gly-191 and 212–213 (GH).

This sequence belongs to the PNP synthase family. As to quaternary structure, homooctamer; tetramer of dimers.

It is found in the cytoplasm. It carries out the reaction 3-amino-2-oxopropyl phosphate + 1-deoxy-D-xylulose 5-phosphate = pyridoxine 5'-phosphate + phosphate + 2 H2O + H(+). It participates in cofactor biosynthesis; pyridoxine 5'-phosphate biosynthesis; pyridoxine 5'-phosphate from D-erythrose 4-phosphate: step 5/5. Functionally, catalyzes the complicated ring closure reaction between the two acyclic compounds 1-deoxy-D-xylulose-5-phosphate (DXP) and 3-amino-2-oxopropyl phosphate (1-amino-acetone-3-phosphate or AAP) to form pyridoxine 5'-phosphate (PNP) and inorganic phosphate. The polypeptide is Pyridoxine 5'-phosphate synthase (Prochlorococcus marinus (strain MIT 9211)).